The following is a 351-amino-acid chain: Phosphoribosylformylglycinamidine cyclo-ligase (351 aa).

Belongs to the AIR synthase family.

The protein localises to the cytoplasm. The enzyme catalyses 2-formamido-N(1)-(5-O-phospho-beta-D-ribosyl)acetamidine + ATP = 5-amino-1-(5-phospho-beta-D-ribosyl)imidazole + ADP + phosphate + H(+). Its pathway is purine metabolism; IMP biosynthesis via de novo pathway; 5-amino-1-(5-phospho-D-ribosyl)imidazole from N(2)-formyl-N(1)-(5-phospho-D-ribosyl)glycinamide: step 2/2. This Burkholderia cenocepacia (strain HI2424) protein is Phosphoribosylformylglycinamidine cyclo-ligase.